A 314-amino-acid chain; its full sequence is ATP synthase gamma chain (314 aa).

The protein belongs to the ATPase gamma chain family. In terms of assembly, F-type ATPases have 2 components, CF(1) - the catalytic core - and CF(0) - the membrane proton channel. CF(1) has five subunits: alpha(3), beta(3), gamma(1), delta(1), epsilon(1). CF(0) has three main subunits: a, b and c.

It localises to the cell membrane. In terms of biological role, produces ATP from ADP in the presence of a proton gradient across the membrane. The gamma chain is believed to be important in regulating ATPase activity and the flow of protons through the CF(0) complex. This is ATP synthase gamma chain from Cutibacterium acnes (strain DSM 16379 / KPA171202) (Propionibacterium acnes).